The sequence spans 98 residues: Cytochrome b (98 aa).

3 consecutive transmembrane segments (helical) span residues 1–18 (LLGL…FLAM), 42–63 (WLIR…YLHV), and 78–98 (WNIG…GYVL). The heme b site is built by histidine 48 and histidine 62.

This sequence belongs to the cytochrome b family. As to quaternary structure, the cytochrome bc1 complex contains 3 respiratory subunits (MT-CYB, CYC1 and UQCRFS1), 2 core proteins (UQCRC1 and UQCRC2) and probably 6 low-molecular weight proteins. Requires heme b as cofactor.

The protein resides in the mitochondrion inner membrane. Component of the ubiquinol-cytochrome c reductase complex (complex III or cytochrome b-c1 complex) that is part of the mitochondrial respiratory chain. The b-c1 complex mediates electron transfer from ubiquinol to cytochrome c. Contributes to the generation of a proton gradient across the mitochondrial membrane that is then used for ATP synthesis. The polypeptide is Cytochrome b (mt-cyb) (Scaphirhynchus platorynchus (Shovelnose sturgeon)).